Reading from the N-terminus, the 211-residue chain is ATP-dependent Clp protease proteolytic subunit 1 (211 aa).

The active-site Nucleophile is the serine 107. Histidine 132 is an active-site residue.

Belongs to the peptidase S14 family. Fourteen ClpP subunits assemble into 2 heptameric rings which stack back to back to give a disk-like structure with a central cavity, resembling the structure of eukaryotic proteasomes.

The protein resides in the cytoplasm. The catalysed reaction is Hydrolysis of proteins to small peptides in the presence of ATP and magnesium. alpha-casein is the usual test substrate. In the absence of ATP, only oligopeptides shorter than five residues are hydrolyzed (such as succinyl-Leu-Tyr-|-NHMec, and Leu-Tyr-Leu-|-Tyr-Trp, in which cleavage of the -Tyr-|-Leu- and -Tyr-|-Trp bonds also occurs).. Cleaves peptides in various proteins in a process that requires ATP hydrolysis. Has a chymotrypsin-like activity. Plays a major role in the degradation of misfolded proteins. This is ATP-dependent Clp protease proteolytic subunit 1 from Mycolicibacterium paratuberculosis (strain ATCC BAA-968 / K-10) (Mycobacterium paratuberculosis).